The primary structure comprises 513 residues: Sterol 14-alpha demethylase (513 aa).

A helical transmembrane segment spans residues 8-28 (AYALLAFVAIMALNVTYQFLF). N-linked (GlcNAc...) asparagine glycosylation is found at Asn-32 and Asn-332. Residue Cys-453 participates in heme binding.

Belongs to the cytochrome P450 family. Requires heme as cofactor.

It is found in the endoplasmic reticulum membrane. The enzyme catalyses a 14alpha-methyl steroid + 3 reduced [NADPH--hemoprotein reductase] + 3 O2 = a Delta(14) steroid + formate + 3 oxidized [NADPH--hemoprotein reductase] + 4 H2O + 4 H(+). The catalysed reaction is a 14alpha-methyl steroid + reduced [NADPH--hemoprotein reductase] + O2 = a 14alpha-hydroxymethyl steroid + oxidized [NADPH--hemoprotein reductase] + H2O + H(+). It carries out the reaction a 14alpha-hydroxymethyl steroid + reduced [NADPH--hemoprotein reductase] + O2 = a 14alpha-formyl steroid + oxidized [NADPH--hemoprotein reductase] + 2 H2O + H(+). It catalyses the reaction a 14alpha-formyl steroid + reduced [NADPH--hemoprotein reductase] + O2 = a Delta(14) steroid + formate + oxidized [NADPH--hemoprotein reductase] + H2O + 2 H(+). The enzyme catalyses lanosterol + 3 reduced [NADPH--hemoprotein reductase] + 3 O2 = 4,4-dimethyl-5alpha-cholesta-8,14,24-trien-3beta-ol + formate + 3 oxidized [NADPH--hemoprotein reductase] + 4 H2O + 4 H(+). The catalysed reaction is lanosterol + reduced [NADPH--hemoprotein reductase] + O2 = 32-hydroxylanosterol + oxidized [NADPH--hemoprotein reductase] + H2O + H(+). It carries out the reaction 32-hydroxylanosterol + reduced [NADPH--hemoprotein reductase] + O2 = 32-oxolanosterol + oxidized [NADPH--hemoprotein reductase] + 2 H2O + H(+). It catalyses the reaction 32-oxolanosterol + reduced [NADPH--hemoprotein reductase] + O2 = 4,4-dimethyl-5alpha-cholesta-8,14,24-trien-3beta-ol + formate + oxidized [NADPH--hemoprotein reductase] + H2O + 2 H(+). The enzyme catalyses eburicol + 3 reduced [NADPH--hemoprotein reductase] + 3 O2 = 14-demethyleburicol + formate + 3 oxidized [NADPH--hemoprotein reductase] + 4 H2O + 4 H(+). The catalysed reaction is eburicol + reduced [NADPH--hemoprotein reductase] + O2 = 32-hydroxyeburicol + oxidized [NADPH--hemoprotein reductase] + H2O + H(+). It carries out the reaction 32-hydroxyeburicol + reduced [NADPH--hemoprotein reductase] + O2 = 32-oxoeburicol + oxidized [NADPH--hemoprotein reductase] + 2 H2O + H(+). It catalyses the reaction 32-oxoeburicol + reduced [NADPH--hemoprotein reductase] + O2 = 14-demethyleburicol + formate + oxidized [NADPH--hemoprotein reductase] + H2O + 2 H(+). The protein operates within steroid biosynthesis; sterol biosynthesis. In terms of biological role, sterol 14alpha-demethylase, encoded by cyp51A, cyp51B and cyp51C, that plays a critical role in the third module of ergosterol biosynthesis pathway, being ergosterol the major sterol component in fungal membranes that participates in a variety of functions. The third module or late pathway involves the ergosterol synthesis itself through consecutive reactions that mainly occur in the endoplasmic reticulum (ER) membrane. In filamentous fungi, during the initial step of this module, lanosterol (lanosta-8,24-dien-3beta-ol) can be metabolized to eburicol. Sterol 14alpha-demethylase catalyzes the three-step oxidative removal of the 14alpha-methyl group (C-32) of both these sterols in the form of formate, and converts eburicol and lanosterol to 14-demethyleburicol (4,4,24-trimethylergosta-8,14,24(28)-trienol) and 4,4-dimethyl-5alpha-cholesta-8,14,24-trien-3beta-ol, respectively, which are further metabolized by other enzymes in the pathway to ergosterol. Can also use substrates not intrinsic to fungi, such as 24,25-dihydrolanosterol (DHL), producing 4,4'-dimethyl-8,14-cholestadien-3-beta-ol, but at lower rates than the endogenous substrates. Its function is as follows. As a target of azole drugs, plays a crucial role in azole drug susceptibility. In Aspergillus flavus (strain ATCC 200026 / FGSC A1120 / IAM 13836 / NRRL 3357 / JCM 12722 / SRRC 167), this protein is Sterol 14-alpha demethylase.